The sequence spans 177 residues: ATP synthase subunit delta (177 aa).

The protein belongs to the ATPase delta chain family. F-type ATPases have 2 components, F(1) - the catalytic core - and F(0) - the membrane proton channel. F(1) has five subunits: alpha(3), beta(3), gamma(1), delta(1), epsilon(1). F(0) has three main subunits: a(1), b(2) and c(10-14). The alpha and beta chains form an alternating ring which encloses part of the gamma chain. F(1) is attached to F(0) by a central stalk formed by the gamma and epsilon chains, while a peripheral stalk is formed by the delta and b chains.

It is found in the cell inner membrane. Its function is as follows. F(1)F(0) ATP synthase produces ATP from ADP in the presence of a proton or sodium gradient. F-type ATPases consist of two structural domains, F(1) containing the extramembraneous catalytic core and F(0) containing the membrane proton channel, linked together by a central stalk and a peripheral stalk. During catalysis, ATP synthesis in the catalytic domain of F(1) is coupled via a rotary mechanism of the central stalk subunits to proton translocation. In terms of biological role, this protein is part of the stalk that links CF(0) to CF(1). It either transmits conformational changes from CF(0) to CF(1) or is implicated in proton conduction. This Proteus mirabilis (strain HI4320) protein is ATP synthase subunit delta.